Consider the following 120-residue polypeptide: 5-hydroxyisourate hydrolase 2 (120 aa).

3 residues coordinate substrate: His-10, Arg-48, and Tyr-117.

Belongs to the transthyretin family. 5-hydroxyisourate hydrolase subfamily. As to quaternary structure, homotetramer.

The catalysed reaction is 5-hydroxyisourate + H2O = 5-hydroxy-2-oxo-4-ureido-2,5-dihydro-1H-imidazole-5-carboxylate + H(+). Functionally, catalyzes the hydrolysis of 5-hydroxyisourate (HIU) to 2-oxo-4-hydroxy-4-carboxy-5-ureidoimidazoline (OHCU). This is 5-hydroxyisourate hydrolase 2 from Rhizobium meliloti (strain 1021) (Ensifer meliloti).